The following is a 530-amino-acid chain: Glucose-6-phosphate isomerase (530 aa).

Glutamate 347 (proton donor) is an active-site residue. Residues histidine 378 and lysine 493 contribute to the active site.

This sequence belongs to the GPI family.

It is found in the cytoplasm. It catalyses the reaction alpha-D-glucose 6-phosphate = beta-D-fructose 6-phosphate. The protein operates within carbohydrate biosynthesis; gluconeogenesis. It functions in the pathway carbohydrate degradation; glycolysis; D-glyceraldehyde 3-phosphate and glycerone phosphate from D-glucose: step 2/4. In terms of biological role, catalyzes the reversible isomerization of glucose-6-phosphate to fructose-6-phosphate. The protein is Glucose-6-phosphate isomerase of Chlamydia abortus (strain DSM 27085 / S26/3) (Chlamydophila abortus).